Here is an 82-residue protein sequence, read N- to C-terminus: Small ribosomal subunit protein uS17 (82 aa).

This sequence belongs to the universal ribosomal protein uS17 family. As to quaternary structure, part of the 30S ribosomal subunit.

Functionally, one of the primary rRNA binding proteins, it binds specifically to the 5'-end of 16S ribosomal RNA. The chain is Small ribosomal subunit protein uS17 from Ehrlichia ruminantium (strain Gardel).